The chain runs to 194 residues: Fe/S biogenesis protein NfuA (194 aa).

Residues Cys152 and Cys155 each contribute to the [4Fe-4S] cluster site.

It belongs to the NfuA family. Homodimer. Requires [4Fe-4S] cluster as cofactor.

Functionally, involved in iron-sulfur cluster biogenesis. Binds a 4Fe-4S cluster, can transfer this cluster to apoproteins, and thereby intervenes in the maturation of Fe/S proteins. Could also act as a scaffold/chaperone for damaged Fe/S proteins. In Pseudomonas entomophila (strain L48), this protein is Fe/S biogenesis protein NfuA.